We begin with the raw amino-acid sequence, 342 residues long: Probable dual-specificity RNA methyltransferase RlmN (342 aa).

Catalysis depends on Glu-91, which acts as the Proton acceptor. The 231-residue stretch at 97–327 (YRYGNTVCLS…VTVRRELGDE (231 aa)) folds into the Radical SAM core domain. A disulfide bond links Cys-104 and Cys-332. [4Fe-4S] cluster is bound by residues Cys-111, Cys-115, and Cys-118. S-adenosyl-L-methionine-binding positions include 158–159 (GE), Ser-190, 213–215 (SLH), and Asn-289. Cys-332 serves as the catalytic S-methylcysteine intermediate.

It belongs to the radical SAM superfamily. RlmN family. [4Fe-4S] cluster is required as a cofactor.

It is found in the cytoplasm. The catalysed reaction is adenosine(2503) in 23S rRNA + 2 reduced [2Fe-2S]-[ferredoxin] + 2 S-adenosyl-L-methionine = 2-methyladenosine(2503) in 23S rRNA + 5'-deoxyadenosine + L-methionine + 2 oxidized [2Fe-2S]-[ferredoxin] + S-adenosyl-L-homocysteine. It catalyses the reaction adenosine(37) in tRNA + 2 reduced [2Fe-2S]-[ferredoxin] + 2 S-adenosyl-L-methionine = 2-methyladenosine(37) in tRNA + 5'-deoxyadenosine + L-methionine + 2 oxidized [2Fe-2S]-[ferredoxin] + S-adenosyl-L-homocysteine. Specifically methylates position 2 of adenine 2503 in 23S rRNA and position 2 of adenine 37 in tRNAs. This Carboxydothermus hydrogenoformans (strain ATCC BAA-161 / DSM 6008 / Z-2901) protein is Probable dual-specificity RNA methyltransferase RlmN.